The following is a 755-amino-acid chain: Polyribonucleotide nucleotidyltransferase (755 aa).

Residues D527 and D533 each coordinate Mg(2+). The region spanning P593–I652 is the KH domain. Residues G664–V733 form the S1 motif domain. A disordered region spans residues G734 to Q755. Positions E740–Q755 are enriched in low complexity.

It belongs to the polyribonucleotide nucleotidyltransferase family. Requires Mg(2+) as cofactor.

It is found in the cytoplasm. It carries out the reaction RNA(n+1) + phosphate = RNA(n) + a ribonucleoside 5'-diphosphate. Its function is as follows. Involved in mRNA degradation. Catalyzes the phosphorolysis of single-stranded polyribonucleotides processively in the 3'- to 5'-direction. This chain is Polyribonucleotide nucleotidyltransferase, found in Mycobacteroides abscessus (strain ATCC 19977 / DSM 44196 / CCUG 20993 / CIP 104536 / JCM 13569 / NCTC 13031 / TMC 1543 / L948) (Mycobacterium abscessus).